The primary structure comprises 279 residues: Putative pyruvate, phosphate dikinase regulatory protein (279 aa).

Residue 153–160 participates in ADP binding; the sequence is GVSRTSKT.

Belongs to the pyruvate, phosphate/water dikinase regulatory protein family. PDRP subfamily.

The enzyme catalyses N(tele)-phospho-L-histidyl/L-threonyl-[pyruvate, phosphate dikinase] + ADP = N(tele)-phospho-L-histidyl/O-phospho-L-threonyl-[pyruvate, phosphate dikinase] + AMP + H(+). The catalysed reaction is N(tele)-phospho-L-histidyl/O-phospho-L-threonyl-[pyruvate, phosphate dikinase] + phosphate + H(+) = N(tele)-phospho-L-histidyl/L-threonyl-[pyruvate, phosphate dikinase] + diphosphate. In terms of biological role, bifunctional serine/threonine kinase and phosphorylase involved in the regulation of the pyruvate, phosphate dikinase (PPDK) by catalyzing its phosphorylation/dephosphorylation. In Rhodopseudomonas palustris (strain ATCC BAA-98 / CGA009), this protein is Putative pyruvate, phosphate dikinase regulatory protein.